We begin with the raw amino-acid sequence, 620 residues long: Glutathione-regulated potassium-efflux system protein KefC (620 aa).

The next 12 membrane-spanning stretches (helical) occupy residues H4–V24, L26–L46, S54–L74, G90–L110, V114–M134, F149–L169, L178–L198, V218–G238, G270–V290, L294–V314, W327–Q347, and A359–T379. Positions Q399 to T518 constitute an RCK N-terminal domain. The segment at Q599–I620 is disordered.

The protein belongs to the monovalent cation:proton antiporter 2 (CPA2) transporter (TC 2.A.37) family. KefC subfamily. Homodimer. Interacts with the regulatory subunit KefF.

Its subcellular location is the cell inner membrane. Pore-forming subunit of a potassium efflux system that confers protection against electrophiles. Catalyzes K(+)/H(+) antiport. The polypeptide is Glutathione-regulated potassium-efflux system protein KefC (Salmonella schwarzengrund (strain CVM19633)).